Here is a 314-residue protein sequence, read N- to C-terminus: MIKVVFMGTPDFSVPVLRRLIEDGYDVIGVVTQPDRPVGRKKVLTPTPVKVEAEKHDIPVLQPLRIREKDEYEKVLALEPDLIVTAAFGQIVPNEILEAPKYGCINVHASLLPELRGGAPIHYAIMEGKEKTGITIMYMVEKLDAGDILTQVEVEIEERETTGSLFDKLSEAGAHLLSKTVPLLIQGKLEPIKQNEEEVTFAYNIKREQEKIDWTKTGEEVYNHIRGLNPWPVAYTTLAGQVVKVWWGEKVPVTKSAEAGTIVAIEEDGFVVATGNETGVKITELQPSGKKRMSCSQFLRGTKPEIGTKLGENA.

(6S)-5,6,7,8-tetrahydrofolate is bound at residue 110–113 (SLLP).

Belongs to the Fmt family.

It catalyses the reaction L-methionyl-tRNA(fMet) + (6R)-10-formyltetrahydrofolate = N-formyl-L-methionyl-tRNA(fMet) + (6S)-5,6,7,8-tetrahydrofolate + H(+). Attaches a formyl group to the free amino group of methionyl-tRNA(fMet). The formyl group appears to play a dual role in the initiator identity of N-formylmethionyl-tRNA by promoting its recognition by IF2 and preventing the misappropriation of this tRNA by the elongation apparatus. The polypeptide is Methionyl-tRNA formyltransferase (Bacillus thuringiensis subsp. konkukian (strain 97-27)).